Consider the following 374-residue polypeptide: Putative glutamate--cysteine ligase 2-1 (374 aa).

It belongs to the glutamate--cysteine ligase type 2 family. YbdK subfamily.

The enzyme catalyses L-cysteine + L-glutamate + ATP = gamma-L-glutamyl-L-cysteine + ADP + phosphate + H(+). ATP-dependent carboxylate-amine ligase which exhibits weak glutamate--cysteine ligase activity. The polypeptide is Putative glutamate--cysteine ligase 2-1 (Saccharopolyspora erythraea (strain ATCC 11635 / DSM 40517 / JCM 4748 / NBRC 13426 / NCIMB 8594 / NRRL 2338)).